A 446-amino-acid chain; its full sequence is Trigger factor (446 aa).

Residues 163–248 form the PPIase FKBP-type domain; the sequence is GDIVTIDFKG…VRGIKRKKLA (86 aa). Positions 423-446 are disordered; sequence SKPVPPREQGAAGETAETAEATPA. Over residues 432–446 the composition is skewed to low complexity; it reads GAAGETAETAEATPA.

Belongs to the FKBP-type PPIase family. Tig subfamily.

It localises to the cytoplasm. It catalyses the reaction [protein]-peptidylproline (omega=180) = [protein]-peptidylproline (omega=0). Involved in protein export. Acts as a chaperone by maintaining the newly synthesized protein in an open conformation. Functions as a peptidyl-prolyl cis-trans isomerase. In Moorella thermoacetica (strain ATCC 39073 / JCM 9320), this protein is Trigger factor.